Consider the following 293-residue polypeptide: Probable flavonol synthase 6 (293 aa).

The Fe2OG dioxygenase domain maps to 156–253 (KAQYVMRINY…RMSWPILVEP (98 aa)). 164-166 (NYY) serves as a coordination point for 2-oxoglutarate. The Fe cation site is built by histidine 178, aspartate 180, and histidine 234. 244-246 (RMS) is a 2-oxoglutarate binding site.

It belongs to the iron/ascorbate-dependent oxidoreductase family. Fe(2+) is required as a cofactor.

The catalysed reaction is a (2R,3R)-dihydroflavonol + 2-oxoglutarate + O2 = a flavonol + succinate + CO2 + H2O. It functions in the pathway secondary metabolite biosynthesis; flavonoid biosynthesis. The sequence is that of Probable flavonol synthase 6 (FLS6) from Arabidopsis thaliana (Mouse-ear cress).